The primary structure comprises 251 residues: Malonyl-[acyl-carrier protein] O-methyltransferase (251 aa).

The protein belongs to the methyltransferase superfamily.

It carries out the reaction malonyl-[ACP] + S-adenosyl-L-methionine = malonyl-[ACP] methyl ester + S-adenosyl-L-homocysteine. It functions in the pathway cofactor biosynthesis; biotin biosynthesis. Functionally, converts the free carboxyl group of a malonyl-thioester to its methyl ester by transfer of a methyl group from S-adenosyl-L-methionine (SAM). It allows to synthesize pimeloyl-ACP via the fatty acid synthetic pathway. The chain is Malonyl-[acyl-carrier protein] O-methyltransferase from Salmonella typhimurium (strain LT2 / SGSC1412 / ATCC 700720).